The chain runs to 199 residues: dITP/XTP pyrophosphatase (199 aa).

Residue 8 to 13 (SGNAGK) participates in substrate binding. Catalysis depends on D69, which acts as the Proton acceptor. Position 69 (D69) interacts with Mg(2+). Substrate-binding positions include S70, 154 to 157 (FGYN), K177, and 182 to 183 (HR).

This sequence belongs to the HAM1 NTPase family. Homodimer. The cofactor is Mg(2+).

The catalysed reaction is XTP + H2O = XMP + diphosphate + H(+). It carries out the reaction dITP + H2O = dIMP + diphosphate + H(+). It catalyses the reaction ITP + H2O = IMP + diphosphate + H(+). In terms of biological role, pyrophosphatase that catalyzes the hydrolysis of nucleoside triphosphates to their monophosphate derivatives, with a high preference for the non-canonical purine nucleotides XTP (xanthosine triphosphate), dITP (deoxyinosine triphosphate) and ITP. Seems to function as a house-cleaning enzyme that removes non-canonical purine nucleotides from the nucleotide pool, thus preventing their incorporation into DNA/RNA and avoiding chromosomal lesions. The chain is dITP/XTP pyrophosphatase from Xanthomonas campestris pv. campestris (strain 8004).